The chain runs to 159 residues: Ribosomal RNA large subunit methyltransferase H (159 aa).

S-adenosyl-L-methionine contacts are provided by residues Leu76, Gly108, and 127-132 (FGRLTL).

The protein belongs to the RNA methyltransferase RlmH family. As to quaternary structure, homodimer.

It is found in the cytoplasm. It carries out the reaction pseudouridine(1915) in 23S rRNA + S-adenosyl-L-methionine = N(3)-methylpseudouridine(1915) in 23S rRNA + S-adenosyl-L-homocysteine + H(+). Specifically methylates the pseudouridine at position 1915 (m3Psi1915) in 23S rRNA. In Listeria monocytogenes serotype 4a (strain HCC23), this protein is Ribosomal RNA large subunit methyltransferase H.